Reading from the N-terminus, the 251-residue chain is Tryptophan synthase alpha chain (251 aa).

Active-site proton acceptor residues include Glu-36 and Asp-47.

The protein belongs to the TrpA family. As to quaternary structure, tetramer of two alpha and two beta chains.

The enzyme catalyses (1S,2R)-1-C-(indol-3-yl)glycerol 3-phosphate + L-serine = D-glyceraldehyde 3-phosphate + L-tryptophan + H2O. Its pathway is amino-acid biosynthesis; L-tryptophan biosynthesis; L-tryptophan from chorismate: step 5/5. In terms of biological role, the alpha subunit is responsible for the aldol cleavage of indoleglycerol phosphate to indole and glyceraldehyde 3-phosphate. The polypeptide is Tryptophan synthase alpha chain (Thermococcus kodakarensis (strain ATCC BAA-918 / JCM 12380 / KOD1) (Pyrococcus kodakaraensis (strain KOD1))).